Here is a 583-residue protein sequence, read N- to C-terminus: Septin-9 (583 aa).

M1 carries the post-translational modification N-acetylmethionine. Residues M1 to G14 show a composition bias toward polar residues. The tract at residues M1–T49 is disordered. Position 30 is a phosphoserine (S30). Phosphothreonine is present on residues T42 and T49. N6-acetyllysine is present on K62. The tract at residues D79–S105 is disordered. Residues S82, S85, and S89 each carry the phosphoserine modification. Residue T143 is modified to Phosphothreonine. Residues V166 to D252 form a disordered region. The span at L204 to S221 shows a compositional bias: polar residues. Y276 carries the phosphotyrosine modification. A Septin-type G domain is found at Q293–E565. The interval G303–S310 is G1 motif. G303 to S310 serves as a coordination point for GTP. S325 and S330 each carry phosphoserine. Residues T337, G363, K443–E451, G499, and R514 each bind GTP. A G3 motif region spans residues D360–G363. Residues A442–D445 are G4 motif.

Belongs to the TRAFAC class TrmE-Era-EngA-EngB-Septin-like GTPase superfamily. Septin GTPase family. In terms of assembly, septins polymerize into heterooligomeric protein complexes that form filaments, and associate with cellular membranes, actin filaments, and microtubules. GTPase activity is required for filament formation. Interacts with SEPTIN2, SEPTIN6, SEPTIN7, SEPTIN11 and SEPTIN14. Interacts with RTKN and ARHGEF18. As to expression, expressed in all tissues examined except muscle. Isoforms are differentially expressed in testes, kidney, liver, heart, spleen and brain.

It is found in the cytoplasm. It localises to the cytoskeleton. Its function is as follows. Filament-forming cytoskeletal GTPase. May play a role in cytokinesis (Potential). The polypeptide is Septin-9 (Mus musculus (Mouse)).